A 93-amino-acid chain; its full sequence is uncharacterized protein (93 aa).

A helical transmembrane segment spans residues 68–88; the sequence is WLVTVVLANGVVSLFLLGGLI.

The protein localises to the membrane. This is an uncharacterized protein from Mycoplasma pneumoniae (strain ATCC 29342 / M129 / Subtype 1) (Mycoplasmoides pneumoniae).